The following is a 357-amino-acid chain: Cinnamyl alcohol dehydrogenase 1 (357 aa).

The Enoyl reductase (ER) domain maps to 20 to 348 (GILSPYTYTL…KNDVRYRFVV (329 aa)). C47 lines the Zn(2+) pocket. S49 serves as a coordination point for NADP(+). The Zn(2+) site is built by H69, E70, C100, C103, C106, C114, and C163. Residues T167, 188–193 (GLGGVG), 211–216 (SSSDKK), T251, G275, and 298–300 (SFI) each bind NADP(+).

It belongs to the zinc-containing alcohol dehydrogenase family. In terms of assembly, homodimer. Zn(2+) serves as cofactor. In terms of tissue distribution, accumulates mainly in the placenta of red fruits, and, to a lower extent, in green fruits placenta, pericarp and seeds.

It is found in the cytoplasm. The enzyme catalyses (E)-cinnamyl alcohol + NADP(+) = (E)-cinnamaldehyde + NADPH + H(+). The catalysed reaction is (E)-coniferol + NADP(+) = (E)-coniferaldehyde + NADPH + H(+). It carries out the reaction (E)-sinapyl alcohol + NADP(+) = (E)-sinapaldehyde + NADPH + H(+). It catalyses the reaction (E)-4-coumaroyl alcohol + NADP(+) = (E)-4-coumaraldehyde + NADPH + H(+). The enzyme catalyses (E)-caffeyl alcohol + NADP(+) = (E)-caffeyl aldehyde + NADPH + H(+). The catalysed reaction is vanillin + NADPH + H(+) = 4-hydroxy-3-methoxy-benzenemethanol + NADP(+). The protein operates within aromatic compound metabolism; phenylpropanoid biosynthesis. Its activity is regulated as follows. Inhibited, in a concentration-dependent manner, by N-(O-hydroxyphenyl) sulfinamoyltertiobutyl acetate (OHPAS), a specific cinnamyl alcohol dehydrogenase (CAD) inhibitor, as well as by ethylenediaminetetraacetic acid (EDTA), a metalloenzyme inhibitor. Its function is as follows. Involved in the biosynthesis of capsinoids natural products (e.g. capsiate), non-pungent alkaloids synthesized from phenylpropanoid intermediates in the placental tissue of sweet chili pepper fruit acting as repellant on herbivorous mammals. Catalyzes the reduction of vanillin to generate vanillyl alcohol, a precursor of capsiate, a non-pungent component that accumulates mainly in the placenta of mature red fruits, but also in green fruits to lower levels. Involved in lignin biosynthesis. Catalyzes the final step specific for the production of lignin monomers. Mediates the conversion of cinnamaldehyde and coniferaldehyde to cinnamyl alcohol and coniferyl alcohol, respectively. Catalyzes the NADPH-dependent reduction of 5-hydroxyconiferaldehyde, sinapaldehyde, 4-coumaraldehyde and caffeyl aldehyde to their respective alcohols. This chain is Cinnamyl alcohol dehydrogenase 1, found in Capsicum annuum (Capsicum pepper).